The chain runs to 121 residues: Immunoglobulin kappa variable 2-40 (121 aa).

The signal sequence occupies residues 1–19 (MRLPAQLLGLLMLWVPGSS). In terms of domain architecture, Ig-like spans 20–121 (EDIVMTQTPL…YYCMQRIEFP (102 aa)). A framework-1 region spans residues 21–43 (DIVMTQTPLSLPVTPGEPASISC). A disulfide bond links Cys43 and Cys114. A complementarity-determining-1 region spans residues 44-60 (RSSQSLLDSDDGNTYLD). The tract at residues 61–75 (WYLQKPGQSPQLLIY) is framework-2. The complementarity-determining-2 stretch occupies residues 76–82 (TLSYRAS). The interval 83-114 (GVPDRFSGSGSGTDFTLKISRVEAEDVGVYYC) is framework-3. Residues 115-121 (MQRIEFP) are complementarity-determining-3.

As to quaternary structure, immunoglobulins are composed of two identical heavy chains and two identical light chains; disulfide-linked.

The protein resides in the secreted. Its subcellular location is the cell membrane. V region of the variable domain of immunoglobulin light chains that participates in the antigen recognition. Immunoglobulins, also known as antibodies, are membrane-bound or secreted glycoproteins produced by B lymphocytes. In the recognition phase of humoral immunity, the membrane-bound immunoglobulins serve as receptors which, upon binding of a specific antigen, trigger the clonal expansion and differentiation of B lymphocytes into immunoglobulins-secreting plasma cells. Secreted immunoglobulins mediate the effector phase of humoral immunity, which results in the elimination of bound antigens. The antigen binding site is formed by the variable domain of one heavy chain, together with that of its associated light chain. Thus, each immunoglobulin has two antigen binding sites with remarkable affinity for a particular antigen. The variable domains are assembled by a process called V-(D)-J rearrangement and can then be subjected to somatic hypermutations which, after exposure to antigen and selection, allow affinity maturation for a particular antigen. The protein is Immunoglobulin kappa variable 2-40 of Homo sapiens (Human).